A 449-amino-acid polypeptide reads, in one-letter code: NADH-quinone oxidoreductase subunit D (449 aa).

The protein belongs to the complex I 49 kDa subunit family. As to quaternary structure, NDH-1 is composed of 14 different subunits. Subunits NuoB, C, D, E, F, and G constitute the peripheral sector of the complex.

It is found in the cell membrane. It carries out the reaction a quinone + NADH + 5 H(+)(in) = a quinol + NAD(+) + 4 H(+)(out). Functionally, NDH-1 shuttles electrons from NADH, via FMN and iron-sulfur (Fe-S) centers, to quinones in the respiratory chain. The immediate electron acceptor for the enzyme in this species is believed to be a menaquinone. Couples the redox reaction to proton translocation (for every two electrons transferred, four hydrogen ions are translocated across the cytoplasmic membrane), and thus conserves the redox energy in a proton gradient. In Saccharopolyspora erythraea (strain ATCC 11635 / DSM 40517 / JCM 4748 / NBRC 13426 / NCIMB 8594 / NRRL 2338), this protein is NADH-quinone oxidoreductase subunit D.